Consider the following 893-residue polypeptide: Translation initiation factor IF-2 (893 aa).

2 disordered regions span residues 51-203 and 216-299; these read KEHG…AEAE and EENE…TSMQ. Basic and acidic residues-rich tracts occupy residues 102 to 203, 216 to 238, and 245 to 261; these read ALEE…AEAE, EENEARWKEEEQKKSAAEKDADY, and HAREAEDAADRKEEQQP. A tr-type G domain is found at 392–561; that stretch reads GRAPVVTIMG…LLQSEVLELT (170 aa). The interval 401–408 is G1; the sequence is GHVDHGKT. Residue 401-408 coordinates GTP; sequence GHVDHGKT. The G2 stretch occupies residues 426 to 430; sequence GITQH. The segment at 447–450 is G3; that stretch reads DTPG. Residues 447-451 and 501-504 contribute to the GTP site; these read DTPGH and NKID. Residues 501–504 form a G4 region; the sequence is NKID. The G5 stretch occupies residues 537–539; the sequence is SAK.

It belongs to the TRAFAC class translation factor GTPase superfamily. Classic translation factor GTPase family. IF-2 subfamily.

The protein localises to the cytoplasm. Functionally, one of the essential components for the initiation of protein synthesis. Protects formylmethionyl-tRNA from spontaneous hydrolysis and promotes its binding to the 30S ribosomal subunits. Also involved in the hydrolysis of GTP during the formation of the 70S ribosomal complex. The chain is Translation initiation factor IF-2 from Aliivibrio fischeri (strain ATCC 700601 / ES114) (Vibrio fischeri).